Consider the following 982-residue polypeptide: Probable DNA-directed RNA polymerase (982 aa).

This sequence belongs to the RNA polymerase beta chain family.

The catalysed reaction is RNA(n) + a ribonucleoside 5'-triphosphate = RNA(n+1) + diphosphate. Its function is as follows. The presence of the two linear plasmids, termed pGKL1 and pGKL2, in strains of Kluyveromyces lactis confers the killer phenotype to the host cell, by promoting the secretion of a toxin able to inhibit the growth of sensitive strains. The sequence is that of Probable DNA-directed RNA polymerase from Kluyveromyces lactis (strain ATCC 8585 / CBS 2359 / DSM 70799 / NBRC 1267 / NRRL Y-1140 / WM37) (Yeast).